The primary structure comprises 1257 residues: Elongation factor 2 (1257 aa).

Residues 273–402 form the DOD-type homing endonuclease domain; sequence LAGLMFGDGC…LQLLLQKFDV (130 aa). Residues 541–782 form the tr-type G domain; sequence VEEHHNFAAE…MVVKHLPDPV (242 aa). GTP is bound by residues 616–620 and 670–673; these read DTPGH and NKVD. Diphthamide is present on H1120. Residues 1237-1250 show a composition bias toward basic and acidic residues; that stretch reads ERKGLKPEPPKPED. Residues 1237–1257 are disordered; it reads ERKGLKPEPPKPEDYIEDYGG.

The protein belongs to the TRAFAC class translation factor GTPase superfamily. Classic translation factor GTPase family. EF-G/EF-2 subfamily. Post-translationally, this protein undergoes a protein self splicing that involves a post-translational excision of the intervening region (intein) followed by peptide ligation.

It is found in the cytoplasm. Its function is as follows. Catalyzes the GTP-dependent ribosomal translocation step during translation elongation. During this step, the ribosome changes from the pre-translocational (PRE) to the post-translocational (POST) state as the newly formed A-site-bound peptidyl-tRNA and P-site-bound deacylated tRNA move to the P and E sites, respectively. Catalyzes the coordinated movement of the two tRNA molecules, the mRNA and conformational changes in the ribosome. The chain is Elongation factor 2 from Methanopyrus kandleri (strain AV19 / DSM 6324 / JCM 9639 / NBRC 100938).